We begin with the raw amino-acid sequence, 584 residues long: MTPPRLFWVWLLVAGTQGVNDGDMRLADGGATNQGRVEIFYRGQWGTVCDNLWDLTDASVVCRALGFENATQALGRAAFGQGSGPIMLDEVQCTGTEASLADCKSLGWLKSNCRHERDAGVVCTNETRSTHTLDLSRELSEALGQIFDSQRGCDLSISVNVQGEDALGFCGHTVILTANLEAQALWKEPGSNVTMSVDAECVPMVRDLLRYFYSRRIDITLSSVKCFHKLASAYGARQLQGYCATLFAILLPQDPSFHMPLDLYAYAVATGDALLEKLCLQFLAWNFEALTQAEAWPSVPTDLLQLLLPRSDLAVPSELALLKAVDTWWGERASHEEVEGLVEKIRFPMMLPEELFELQFNLSLYWSHEALFQKKTLQALEFHTVPFQLLARYKGLNLTEDTYKPRIYTSPTWSAFVTDSSWSARKSQLVYQSRRGPLVKYSSDYFQAPSDYRYYPYQSFQTPQHPSFLFQDKRVSWSLVYLPTIQSCWNYGFSCSSDELPVLGLTKSGGSDRTIAYENKALMLCEGLFVADVTDFEGWKAAIPSALDTNSSKSTSSFPCPAGHFNGFRTVIRPFYLTNSSGVD.

The signal sequence occupies residues 1–18 (MTPPRLFWVWLLVAGTQG). The 101-residue stretch at 24–124 (MRLADGGATN…HERDAGVVCT (101 aa)) folds into the SRCR domain. 3 disulfide bridges follow: cysteine 49–cysteine 113, cysteine 62–cysteine 123, and cysteine 93–cysteine 103. The N-linked (GlcNAc...) asparagine glycan is linked to asparagine 69. Asparagine 125 and asparagine 192 each carry an N-linked (GlcNAc...) asparagine glycan. One can recognise a BTB domain in the interval 153 to 221 (CDLSISVNVQ…FYSRRIDITL (69 aa)). The region spanning 260–359 (PLDLYAYAVA…MLPEELFELQ (100 aa)) is the BACK domain. Asparagine 361, asparagine 397, asparagine 550, and asparagine 579 each carry an N-linked (GlcNAc...) asparagine glycan.

In terms of assembly, homodimers and homomultimers. The multimers form ring-like structures with a diameter of 30-40 nm. Binds LGALS1 and LGALS3. Binds ITGB1, COL4A1, COL5A1, COL6A1, FN1 and NID. Interacts with the gamma-tubulin ring complex (gamma-TuRC), composed of gamma-tubulin, TUBGCP2, TUBGCP3, TUBGCP4, TUBGCP5 and TUBGCP6. The unglycosylated form interacts with PDE4DIP; this interaction, which is PDE4DIP isoform-specific, may connect a pericentrosomal complex, made of AKAP9, CDK5RAP2, EB1/MAPRE1 and PDE4DIP, to the gamma-tubulin ring complex (gamma-TuRC) to promote microtubule assembly and acetylation.

The protein resides in the secreted. The protein localises to the extracellular space. It localises to the extracellular matrix. In terms of biological role, promotes integrin-mediated cell adhesion. May stimulate host defense against viruses and tumor cells. The polypeptide is Galectin-3-binding protein (LGALS3BP) (Pongo abelii (Sumatran orangutan)).